The sequence spans 429 residues: Transcription factor IIIA (429 aa).

A disordered region spans residues 1–45 (MGGEVLNNEGMPLAELKQETIPISRSESSESLNSLTSTRSSSSNR). The span at 24 to 44 (SRSESSESLNSLTSTRSSSSN) shows a compositional bias: low complexity. 9 C2H2-type zinc fingers span residues 49-74 (YFCDYDGCDKAFTRPSILTEHQLSVH), 80-102 (FQCDKCAKSFVKKSHLERHLYTH), 108-130 (FQCSYCGKGVTTRQQLKRHEVTH), 134-159 (FICPEEGCNLRFYKHPQLRAHILSVH), 163-186 (LTCPHCNKSFQRPYRLRNHISKHH), 194-219 (YQCTFAGCCKEFRIWSQLQSHIKNDH), 222-244 (LKCPICSKPCVGENGLQMHMIIH), 253-277 (WKCHICPDMSFSRKHDLLTHYGSIH), and 365-389 (YRCFYNNCSRTFKTKEKYEKHIDKH). Over residues 406 to 416 (KTLVDQNHKEP) the composition is skewed to basic and acidic residues. The disordered stretch occupies residues 406 to 429 (KTLVDQNHKEPFIIQKETQSAGDK).

The protein resides in the nucleus. Its function is as follows. Interacts with the internal control region (ICR) of approximately 50 bases within the 5S RNA genes, is required for correct transcription of these genes by RNA polymerase III. Also binds the transcribed 5S RNA's. The polypeptide is Transcription factor IIIA (PZF1) (Saccharomyces cerevisiae (strain ATCC 204508 / S288c) (Baker's yeast)).